We begin with the raw amino-acid sequence, 420 residues long: Annetocin receptor (420 aa).

The Extracellular portion of the chain corresponds to 1-54 (MEMDDDEAILLDDIYALASTPNQTIVTSSFPQTVSPGFLARRNEALAMVEVAVQ). A glycan (N-linked (GlcNAc...) asparagine) is linked at Asn22. A helical transmembrane segment spans residues 55 to 75 (STILILTVVGNAAVLAMIVSL). Topologically, residues 76–83 (SRHKDLGR) are cytoplasmic. A helical transmembrane segment spans residues 84 to 104 (MYTMIGHLSCADLFVAIFNLL). Topologically, residues 105–124 (PQLLWDVTHRFRGGRVLCKL) are extracellular. A disulfide bridge connects residues Cys122 and Cys201. A helical transmembrane segment spans residues 125–145 (VKYVQVVAMYASAYVLMSTAV). Topologically, residues 146 to 166 (DRYTAICHPMRSHTWTSTTAH) are cytoplasmic. The helical transmembrane segment at 167–187 (YLVIGAWVLALVFAVPQLVIF) threads the bilayer. At 188–212 (DYVEVVPGSGVYDCVDHFRPRWTLP) the chain is on the extracellular side. A helical transmembrane segment spans residues 213–233 (VYITWFALAVYVIPLVVLATI). At 234-328 (YLRICVVVWK…KTKTVKLTLT (95 aa)) the chain is on the cytoplasmic side. A helical transmembrane segment spans residues 329 to 349 (VVISYLVCWAPFFVSHIWSAW). The Extracellular segment spans residues 350 to 360 (DPHAPFEGTEM). A helical transmembrane segment spans residues 361–381 (VITLLLGSLNSCINPWIYLAF). Topologically, residues 382-420 (SDQLRRKVTQCCPRSWGQRPSTLSHDSTDFRSGSRPTHS) are cytoplasmic. A disordered region spans residues 397–420 (WGQRPSTLSHDSTDFRSGSRPTHS). Positions 399–420 (QRPSTLSHDSTDFRSGSRPTHS) are enriched in polar residues.

The protein belongs to the G-protein coupled receptor 1 family. Vasopressin/oxytocin receptor subfamily. As to expression, nephridia in clitellum region.

It is found in the cell membrane. In terms of biological role, receptor for annetocin. Activation by annetocin may induce egg-laying behavior through calcium-dependent signaling. This Eisenia fetida (Red wiggler worm) protein is Annetocin receptor.